The following is a 436-amino-acid chain: C4-dicarboxylate transport protein 2 (436 aa).

9 helical membrane-spanning segments follow: residues 14-34, 45-65, 77-97, 142-162, 198-218, 223-243, 290-310, 331-351, and 353-373; these read VLVA…TAVA, LIKM…IAGM, MALL…LVVV, VVGA…VLFG, PIGA…GSLV, LMLC…GGIA, VVGL…SIYL, ITLL…TGSG, and IVLA…LALI. Residues 414-436 are disordered; it reads ELAGEGNASSPASDIPVGGREAV.

It belongs to the dicarboxylate/amino acid:cation symporter (DAACS) (TC 2.A.23) family.

Its subcellular location is the cell inner membrane. Functionally, responsible for the transport of dicarboxylates such as succinate, fumarate, and malate from the periplasm across the membrane. In Pseudomonas paraeruginosa (strain DSM 24068 / PA7) (Pseudomonas aeruginosa (strain PA7)), this protein is C4-dicarboxylate transport protein 2.